The following is a 478-amino-acid chain: Shikimate biosynthesis protein AroDE (478 aa).

The tract at residues 1 to 208 is 3-dehydroquinate dehydratase; it reads MLCTTISGPS…LKHHYFYNFA (208 aa). 3-dehydroquinate is bound by residues serine 21, 29-31, and 55-57; these read EMR and AWK. Histidine 110 (proton donor/acceptor; for 3-dehydroquinate dehydratase activity) is an active-site residue. Lysine 133 (schiff-base intermediate with substrate; for 3-dehydroquinate dehydratase activity) is an active-site residue. 3-dehydroquinate-binding residues include arginine 171 and glutamine 196. The segment at 209 to 478 is shikimate 5-dehydrogenase; sequence SLSAQSPICA…VLASLFSIAP (270 aa). 226-228 serves as a coordination point for shikimate; it reads SIG. Lysine 277 functions as the Proton acceptor; for shikimate dehydrogenase activity in the catalytic mechanism. Shikimate-binding residues include asparagine 298 and aspartate 313. Residues 337–341, 360–362, and glycine 435 each bind NADP(+); these read GAGGA and NRT. Position 442 (glutamine 442) interacts with shikimate.

The protein in the N-terminal section; belongs to the type-I 3-dehydroquinase family. In the C-terminal section; belongs to the shikimate dehydrogenase family.

It catalyses the reaction 3-dehydroquinate = 3-dehydroshikimate + H2O. The catalysed reaction is shikimate + NADP(+) = 3-dehydroshikimate + NADPH + H(+). The protein operates within metabolic intermediate biosynthesis; chorismate biosynthesis; chorismate from D-erythrose 4-phosphate and phosphoenolpyruvate: step 3/7. It functions in the pathway metabolic intermediate biosynthesis; chorismate biosynthesis; chorismate from D-erythrose 4-phosphate and phosphoenolpyruvate: step 4/7. Functionally, bifunctional enzyme that catalyzes two sequential steps of the aromatic amino acids biosynthetic pathway. In the first reaction, the AroD domain catalyzes the cis-dehydration of 3-dehydroquinate (DHQ) and introduces the first double bond of the aromatic ring to yield 3-dehydroshikimate; in the second reaction, the AroE domain catalyzes the reversible NADPH linked reduction of 3-dehydroshikimate (DHSA) to yield shikimate (SA). This chain is Shikimate biosynthesis protein AroDE, found in Chlamydia trachomatis serovar D (strain ATCC VR-885 / DSM 19411 / UW-3/Cx).